Reading from the N-terminus, the 277-residue chain is 5'-nucleotidase SurE (277 aa).

Aspartate 16, aspartate 17, serine 48, and asparagine 101 together coordinate a divalent metal cation.

It belongs to the SurE nucleotidase family. Requires a divalent metal cation as cofactor.

It localises to the cytoplasm. It catalyses the reaction a ribonucleoside 5'-phosphate + H2O = a ribonucleoside + phosphate. Its function is as follows. Nucleotidase that shows phosphatase activity on nucleoside 5'-monophosphates. This is 5'-nucleotidase SurE from Parvibaculum lavamentivorans (strain DS-1 / DSM 13023 / NCIMB 13966).